The chain runs to 124 residues: Large-conductance mechanosensitive channel (124 aa).

3 consecutive transmembrane segments (helical) span residues 14-34 (VIDL…VQSL), 37-57 (NLIN…NLVF), and 67-87 (GSFI…FLIV).

It belongs to the MscL family. Homopentamer.

The protein resides in the cell membrane. Functionally, channel that opens in response to stretch forces in the membrane lipid bilayer. May participate in the regulation of osmotic pressure changes within the cell. The protein is Large-conductance mechanosensitive channel of Lactobacillus acidophilus (strain ATCC 700396 / NCK56 / N2 / NCFM).